Here is a 689-residue protein sequence, read N- to C-terminus: Glycine--tRNA ligase beta subunit (689 aa).

The protein belongs to the class-II aminoacyl-tRNA synthetase family. As to quaternary structure, tetramer of two alpha and two beta subunits.

The protein localises to the cytoplasm. It catalyses the reaction tRNA(Gly) + glycine + ATP = glycyl-tRNA(Gly) + AMP + diphosphate. The sequence is that of Glycine--tRNA ligase beta subunit from Citrobacter koseri (strain ATCC BAA-895 / CDC 4225-83 / SGSC4696).